A 104-amino-acid chain; its full sequence is Astakine (104 aa).

Residues 1 to 22 (MKMRGVSVGVLVVAMMSGLAMA) form the signal peptide. Intrachain disulfides connect Cys25/Cys38, Cys32/Cys50, Cys37/Cys76, Cys60/Cys84, and Cys78/Cys91.

This sequence belongs to the AVIT (prokineticin) family.

It localises to the secreted. In terms of biological role, cytokine directly involved in hematopoiesis. In Pacifastacus leniusculus (Signal crayfish), this protein is Astakine.